The following is a 235-amino-acid chain: Elongation factor Tu (235 aa).

A tr-type G domain is found at 1-125 (KNMITGAAQM…EVDEYIPTPE (125 aa)). Residue 47-50 (NKED) coordinates GTP.

It belongs to the TRAFAC class translation factor GTPase superfamily. Classic translation factor GTPase family. EF-Tu/EF-1A subfamily. Monomer.

The protein localises to the cytoplasm. It carries out the reaction GTP + H2O = GDP + phosphate + H(+). In terms of biological role, GTP hydrolase that promotes the GTP-dependent binding of aminoacyl-tRNA to the A-site of ribosomes during protein biosynthesis. This is Elongation factor Tu (tufA) from Gloeothece membranacea (strain PCC 6501 / SAG 26.84).